Reading from the N-terminus, the 214-residue chain is Ribosomal RNA small subunit methyltransferase G (214 aa).

Residues Gly-58, 109–110 (AE), and Arg-126 each bind S-adenosyl-L-methionine.

Belongs to the methyltransferase superfamily. RNA methyltransferase RsmG family.

The protein resides in the cytoplasm. In terms of biological role, specifically methylates the N7 position of a guanine in 16S rRNA. In Ureaplasma parvum serovar 3 (strain ATCC 700970), this protein is Ribosomal RNA small subunit methyltransferase G.